A 741-amino-acid polypeptide reads, in one-letter code: Condensin complex subunit 2 (741 aa).

Residues 1-67 (MGPPGPALPA…NDDEKERLQR (67 aa)) form a disordered region. 3 positions are modified to phosphoserine: Ser-15, Ser-25, and Ser-28. Thr-49 carries the post-translational modification Phosphothreonine. Ser-70, Ser-78, Ser-81, Ser-87, Ser-89, Ser-92, Ser-96, Ser-201, and Ser-233 each carry phosphoserine. Positions 361–377 (CGDFPDGSLGDDFDAND) are enriched in acidic residues. Positions 361–383 (CGDFPDGSLGDDFDANDEPDHTA) are disordered. Ser-432 is modified (phosphoserine). The interval 447–467 (FRPRRKQDAPSQSENKKKSTK) is disordered. Lys-488 participates in a covalent cross-link: Glycyl lysine isopeptide (Lys-Gly) (interchain with G-Cter in SUMO2). Ser-496 is modified (phosphoserine). A phosphothreonine mark is found at Thr-598 and Thr-605. Residue Lys-637 is modified to N6-acetyllysine.

The protein belongs to the CND2 (condensin subunit 2) family. Component of the condensin complex, which contains the SMC2 and SMC4 heterodimer, and three non SMC subunits that probably regulate the complex: NCAPH/BRRN1, NCAPD2/CAPD2 and NCAPG. Post-translationally, phosphorylated by CDK1. Its phosphorylation, as well as that of NCAPD2 and NCAPG subunits, activates the condensin complex and is required for chromosome condensation. As to expression, widely expressed at low level. Expressed in proliferating cells.

Its subcellular location is the nucleus. It is found in the cytoplasm. The protein resides in the chromosome. In terms of biological role, regulatory subunit of the condensin complex, a complex required for conversion of interphase chromatin into mitotic-like condense chromosomes. The condensin complex probably introduces positive supercoils into relaxed DNA in the presence of type I topoisomerases and converts nicked DNA into positive knotted forms in the presence of type II topoisomerases. Early in neurogenesis, may play an essential role to ensure accurate mitotic chromosome condensation in neuron stem cells, ultimately affecting neuron pool and cortex size. This is Condensin complex subunit 2 from Homo sapiens (Human).